The sequence spans 242 residues: 7-cyano-7-deazaguanine synthase (242 aa).

An ATP-binding site is contributed by 13-23; the sequence is FSGGQDSSVCL. Zn(2+)-binding residues include C201, C216, C219, and C222.

The protein belongs to the QueC family. The cofactor is Zn(2+).

The enzyme catalyses 7-carboxy-7-deazaguanine + NH4(+) + ATP = 7-cyano-7-deazaguanine + ADP + phosphate + H2O + H(+). It participates in purine metabolism; 7-cyano-7-deazaguanine biosynthesis. Catalyzes the ATP-dependent conversion of 7-carboxy-7-deazaguanine (CDG) to 7-cyano-7-deazaguanine (preQ(0)). The sequence is that of 7-cyano-7-deazaguanine synthase from Caulobacter vibrioides (strain ATCC 19089 / CIP 103742 / CB 15) (Caulobacter crescentus).